A 356-amino-acid polypeptide reads, in one-letter code: Malate dehydrogenase, glyoxysomal (356 aa).

A glyoxysome-targeting transit peptide spans 1–36 (MEDAAAAARRMERLASHLRPPASQMEESPLLRGSNC). NAD(+)-binding positions include 51–57 (GASGGIG) and Asp77. Residues Arg124 and Arg130 each coordinate substrate. NAD(+)-binding positions include Asn137 and 160 to 162 (ISN). Residues Asn162 and Arg196 each coordinate substrate. Residue His220 is the Proton acceptor of the active site. An NAD(+)-binding site is contributed by Met271.

The protein belongs to the LDH/MDH superfamily. MDH type 1 family. In terms of assembly, homodimer.

The protein localises to the glyoxysome. It carries out the reaction (S)-malate + NAD(+) = oxaloacetate + NADH + H(+). The chain is Malate dehydrogenase, glyoxysomal from Oryza sativa subsp. japonica (Rice).